We begin with the raw amino-acid sequence, 455 residues long: UDP-N-acetylmuramoylalanine--D-glutamate ligase (455 aa).

Position 117-123 (117-123 (GTNGKTT)) interacts with ATP.

It belongs to the MurCDEF family.

The protein localises to the cytoplasm. The enzyme catalyses UDP-N-acetyl-alpha-D-muramoyl-L-alanine + D-glutamate + ATP = UDP-N-acetyl-alpha-D-muramoyl-L-alanyl-D-glutamate + ADP + phosphate + H(+). It participates in cell wall biogenesis; peptidoglycan biosynthesis. Its function is as follows. Cell wall formation. Catalyzes the addition of glutamate to the nucleotide precursor UDP-N-acetylmuramoyl-L-alanine (UMA). This Pelotomaculum thermopropionicum (strain DSM 13744 / JCM 10971 / SI) protein is UDP-N-acetylmuramoylalanine--D-glutamate ligase.